The sequence spans 565 residues: MQTKYIFVTGGVTSSLGKGIFSASLGRLLSDRGLDVTIQKFDPYINVDPGTMNPYEHGEVYVTNDGAETDLDLGHYERFLDQPTSQANNVTTGRVYMEVISKEREGAYLGKTVQVVPHIIDEIKHWMLKLGETGDYDVVITEIGGTVGDIEGQPYLEAIRQLRNELGPRNTMIAHLTLIPHLRAAGELKTKPTQHSVKELLAHGLQPDTIVCRSERSITAEVRRKISLFCNVEEEAVIQMLDAESIYEVPLLLRDEGTGELVVDRFYPKRGDENEKCSDTPDLSDWIGFLKRLKNPEETIPIALVGKYVEHQDAYKSITESFILAGVPDEVQVEVKYVPSEDLSPDTVESQLGDVAGVLVAPGFGDRGVEGKILAAQYAREHDVPFFGICLGLQCAIVEFARHVCGWDGAHSTEFDEDTAYPVIDLMEEQKEISDKGGTMRLGQYDCRIQDGSRAHEIYEADMVQERHRHRYEVNNVLRYKLLEEGMRFSGVNPDTDLVEIMELPDKRWFLGVQFHPEYRTTVGDPHPLFRSFVRACTAYAHEEDLVTSPQPPERKAVPLASVDM.

The tract at residues 1-268 is amidoligase domain; that stretch reads MQTKYIFVTG…GELVVDRFYP (268 aa). Ser-14 serves as a coordination point for CTP. UTP is bound at residue Ser-14. 15 to 20 contacts ATP; sequence SLGKGI. Tyr-55 contacts L-glutamine. An ATP-binding site is contributed by Asp-72. Residues Asp-72 and Glu-142 each contribute to the Mg(2+) site. Residues 149-151, 189-194, and Lys-225 each bind CTP; these read DIE and KTKPTQ. Residues 189–194 and Lys-225 contribute to the UTP site; that span reads KTKPTQ. Residues 301–543 form the Glutamine amidotransferase type-1 domain; sequence PIALVGKYVE…VRACTAYAHE (243 aa). Residue Gly-363 coordinates L-glutamine. Cys-390 (nucleophile; for glutamine hydrolysis) is an active-site residue. Residues 391 to 394, Glu-414, and Arg-471 contribute to the L-glutamine site; that span reads LGLQ. Active-site residues include His-516 and Glu-518. The disordered stretch occupies residues 545-565; that stretch reads DLVTSPQPPERKAVPLASVDM.

The protein belongs to the CTP synthase family. As to quaternary structure, homotetramer.

It carries out the reaction UTP + L-glutamine + ATP + H2O = CTP + L-glutamate + ADP + phosphate + 2 H(+). It catalyses the reaction L-glutamine + H2O = L-glutamate + NH4(+). The enzyme catalyses UTP + NH4(+) + ATP = CTP + ADP + phosphate + 2 H(+). It functions in the pathway pyrimidine metabolism; CTP biosynthesis via de novo pathway; CTP from UDP: step 2/2. With respect to regulation, allosterically activated by GTP, when glutamine is the substrate; GTP has no effect on the reaction when ammonia is the substrate. The allosteric effector GTP functions by stabilizing the protein conformation that binds the tetrahedral intermediate(s) formed during glutamine hydrolysis. Inhibited by the product CTP, via allosteric rather than competitive inhibition. Catalyzes the ATP-dependent amination of UTP to CTP with either L-glutamine or ammonia as the source of nitrogen. Regulates intracellular CTP levels through interactions with the four ribonucleotide triphosphates. This is CTP synthase from Salinibacter ruber (strain DSM 13855 / M31).